A 413-amino-acid polypeptide reads, in one-letter code: Tyrosine--tRNA ligase (413 aa).

Positions 59–68 match the 'HIGH' region motif; that stretch reads PTAPDIHLGH. The 'KMSKS' region signature appears at 243 to 247; the sequence is KMSKS. Lys-246 is an ATP binding site. One can recognise an S4 RNA-binding domain in the interval 351–411; the sequence is LAIGQLLKQA…GKRRFARVTL (61 aa).

This sequence belongs to the class-I aminoacyl-tRNA synthetase family. TyrS type 2 subfamily. Homodimer.

It localises to the cytoplasm. It carries out the reaction tRNA(Tyr) + L-tyrosine + ATP = L-tyrosyl-tRNA(Tyr) + AMP + diphosphate + H(+). In terms of biological role, catalyzes the attachment of tyrosine to tRNA(Tyr) in a two-step reaction: tyrosine is first activated by ATP to form Tyr-AMP and then transferred to the acceptor end of tRNA(Tyr). This chain is Tyrosine--tRNA ligase, found in Burkholderia pseudomallei (strain K96243).